Consider the following 168-residue polypeptide: Secretory-abundant heat soluble protein 33020 (168 aa).

The N-terminal stretch at 1-19 is a signal peptide; sequence MARFLVALALFGVVAMTAA. Positions 26-57 are SAHS-c1; sequence EWSGKPWLGKFVAEVSDKSENWEAFVDALGLP. Residues 72-100 are SAHS-c2; the sequence is YKQGEHYHHILSLPDKNINKDIEFTLGQE. The interval 113-162 is SAHS-c3; sequence KYFEDGNKLVADVSIPAKGKSIHDVYDVQGDQLIKSYKVGDVVAKKWFKK.

This sequence belongs to the Secretory-abundant heat soluble protein (SAHS) family.

The protein localises to the secreted. Its function is as follows. Secreted heat soluble protein acting as a molecular shield in water-deficient condition. Tardigrade-specific intrinsically disordered proteins (TDPs) are essential for desiccation tolerance by forming non-crystalline amorphous solids upon desiccation, and this vitrified state mirrors their protective capabilities. This chain is Secretory-abundant heat soluble protein 33020, found in Hypsibius exemplaris (Freshwater tardigrade).